Consider the following 507-residue polypeptide: Probable cyclic di-GMP phosphodiesterase PdeG (507 aa).

The next 2 membrane-spanning stretches (helical) occupy residues 4–24 (TLIP…ILNI) and 217–237 (LIDK…AAAF). Residues 246 to 500 (SATPEEILRR…DLVKIILSKP (255 aa)) form the EAL domain.

It localises to the cell membrane. The enzyme catalyses 3',3'-c-di-GMP + H2O = 5'-phosphoguanylyl(3'-&gt;5')guanosine + H(+). In terms of biological role, phosphodiesterase (PDE) that catalyzes the hydrolysis of cyclic-di-GMP (c-di-GMP) to 5'-pGpG. This is Probable cyclic di-GMP phosphodiesterase PdeG from Escherichia coli (strain K12).